The chain runs to 319 residues: Phosphate acyltransferase (319 aa).

Belongs to the PlsX family. As to quaternary structure, homodimer. Probably interacts with PlsY.

Its subcellular location is the cytoplasm. It carries out the reaction a fatty acyl-[ACP] + phosphate = an acyl phosphate + holo-[ACP]. The protein operates within lipid metabolism; phospholipid metabolism. Catalyzes the reversible formation of acyl-phosphate (acyl-PO(4)) from acyl-[acyl-carrier-protein] (acyl-ACP). This enzyme utilizes acyl-ACP as fatty acyl donor, but not acyl-CoA. This is Phosphate acyltransferase from Chlamydia muridarum (strain MoPn / Nigg).